A 441-amino-acid polypeptide reads, in one-letter code: Cytochrome P450 monooxygenase cpsC (441 aa).

Positions 175–195 (STTSQARKDETTATQQAGMEQ) are disordered. The segment covering 186–195 (TATQQAGMEQ) has biased composition (polar residues). Cysteine 377 lines the heme pocket.

Belongs to the cytochrome P450 family. It depends on heme as a cofactor.

The catalysed reaction is campesine D + reduced [NADPH--hemoprotein reductase] + O2 = campesine G + oxidized [NADPH--hemoprotein reductase] + 2 H2O + H(+). The protein operates within alkaloid biosynthesis. Functionally, cytochrome P450 monooxygenase; part of the gene cluster that mediates the biosynthesis of campesine G, a dimeric indole piperazine alkaloid that shows good insecticidal activity Galleria mellonella. Within the pathway, cpsC catalyzes regioselective dehydrogenation reaction towards C2-N1 of the (2H)-indole ring of campesine D to yield the final product, campesine G. The non-canonical non-ribosomal peptide synthetase cpsA catalyzes the first steps of the pathway by producing L-tryptophanal and L-valinal from their respective amino-acids. These products condensate spontaneously to form trypyl-valyl pyrazine also known as didehydrocampesine A. The NmrA-like family domain-containing oxidoreductase cpsB is the next enzyme in cps pathway and reduces the unstable didehydrocampesine A to campesine A. The methyltransferase cpsF and the acetyltransferase cpsE both recognize N13 of piperazine ring to carry out methylation and acetylation of campesine A to produce campesine C and B, respectively. The cytochrome P450 monooxygenase cpsD then acts as a dimerase that catalyzes oxidative heterocoupling between campesine B and C to produce heterodimers with unexpected 6/5/6/6/6/6/5/6 eight-ring scaffold called campesine D. Finally,the cytochrome P450 monooxygenase cpsC is a regioselective dehydrogenase that catalyzes dehydrogenation reaction towards C2-N1 to produce campesine G. The polypeptide is Cytochrome P450 monooxygenase cpsC (Aspergillus campestris (strain IBT 28561)).